The primary structure comprises 103 residues: Large ribosomal subunit protein bL21 (103 aa).

Belongs to the bacterial ribosomal protein bL21 family. As to quaternary structure, part of the 50S ribosomal subunit. Contacts protein L20.

Its function is as follows. This protein binds to 23S rRNA in the presence of protein L20. The sequence is that of Large ribosomal subunit protein bL21 from Lactobacillus delbrueckii subsp. bulgaricus (strain ATCC 11842 / DSM 20081 / BCRC 10696 / JCM 1002 / NBRC 13953 / NCIMB 11778 / NCTC 12712 / WDCM 00102 / Lb 14).